The chain runs to 514 residues: Inosine-5'-monophosphate dehydrogenase (514 aa).

2 consecutive CBS domains span residues 112-171 (FISK…DTPV) and 175-233 (MTRR…PHST). NAD(+) is bound by residues 270 to 272 (DSS) and 320 to 322 (GMG). K(+) contacts are provided by Gly-322 and Gly-324. Residue Ser-325 coordinates IMP. A K(+)-binding site is contributed by Cys-327. Residue Cys-327 is the Thioimidate intermediate of the active site. Residues 360 to 362 (DGG), 383 to 384 (GG), and 407 to 411 (YRGMG) contribute to the IMP site. The Proton acceptor role is filled by Arg-425. Residue Gln-437 coordinates IMP. Positions 496, 497, and 498 each coordinate K(+). A Microbody targeting signal motif is present at residues 512–514 (AKM).

This sequence belongs to the IMPDH/GMPR family. As to quaternary structure, heterotetramer. Interacts with glycosomal protein sorting receptor PEX5. The cofactor is K(+).

The protein resides in the glycosome. It catalyses the reaction IMP + NAD(+) + H2O = XMP + NADH + H(+). Its pathway is purine metabolism; XMP biosynthesis via de novo pathway; XMP from IMP: step 1/1. With respect to regulation, mycophenolic acid (MPA) is a non-competitive inhibitor that prevents formation of the closed enzyme conformation by binding to the same site as the amobile flap. In contrast, mizoribine monophosphate (MZP) is a competitive inhibitor that induces the closed conformation. MPA is a potent inhibitor of mammalian IMPDHs but a poor inhibitor of the bacterial enzymes. MZP is a more potent inhibitor of bacterial IMPDH. Potently inhibited by MPA. Inhibited by XMP and GMP. Functionally, catalyzes the conversion of inosine 5'-phosphate (IMP) to xanthosine 5'-phosphate (XMP), the first committed and rate-limiting step in the de novo synthesis of guanine nucleotides, and therefore plays an important role in the regulation of cell growth. This Leishmania donovani protein is Inosine-5'-monophosphate dehydrogenase.